The chain runs to 286 residues: ATP synthase gamma chain (286 aa).

Belongs to the ATPase gamma chain family. As to quaternary structure, F-type ATPases have 2 components, CF(1) - the catalytic core - and CF(0) - the membrane proton channel. CF(1) has five subunits: alpha(3), beta(3), gamma(1), delta(1), epsilon(1). CF(0) has three main subunits: a, b and c.

It localises to the cell inner membrane. Functionally, produces ATP from ADP in the presence of a proton gradient across the membrane. The gamma chain is believed to be important in regulating ATPase activity and the flow of protons through the CF(0) complex. The protein is ATP synthase gamma chain of Pseudomonas putida (strain W619).